A 236-amino-acid polypeptide reads, in one-letter code: Hydroxyacylglutathione hydrolase (236 aa).

Residues His52, His54, Asp56, His57, His108, Asp125, and His163 each contribute to the Zn(2+) site.

Belongs to the metallo-beta-lactamase superfamily. Glyoxalase II family. In terms of assembly, monomer. Requires Zn(2+) as cofactor.

The catalysed reaction is an S-(2-hydroxyacyl)glutathione + H2O = a 2-hydroxy carboxylate + glutathione + H(+). Its pathway is secondary metabolite metabolism; methylglyoxal degradation; (R)-lactate from methylglyoxal: step 2/2. Functionally, thiolesterase that catalyzes the hydrolysis of S-D-lactoyl-glutathione to form glutathione and D-lactic acid. The sequence is that of Hydroxyacylglutathione hydrolase from Mannheimia succiniciproducens (strain KCTC 0769BP / MBEL55E).